A 185-amino-acid polypeptide reads, in one-letter code: 3-hexulose-6-phosphate isomerase (185 aa).

The SIS domain maps to 29-172; that stretch reads LADHILSSHQ…ILKLMEKKGL (144 aa). Substrate is bound by residues Ser47 and 86–91; that span reads SGSGET. The Proton acceptor role is filled by Glu152.

Belongs to the SIS family. PHI subfamily. In terms of assembly, homotetramer.

It catalyses the reaction D-arabino-hex-3-ulose 6-phosphate = beta-D-fructose 6-phosphate. It participates in one-carbon metabolism; formaldehyde assimilation via RuMP pathway; D-fructose 6-phosphate from D-ribulose 5-phosphate and formaldehyde: step 2/2. Its function is as follows. Catalyzes the isomerization between 3-hexulose 6-phosphate and fructose 6-phosphate. Together with HxlA, may act as a formaldehyde detoxification system. The chain is 3-hexulose-6-phosphate isomerase (hxlB) from Bacillus subtilis (strain 168).